Consider the following 389-residue polypeptide: Agamous-like MADS-box protein AGL65 (389 aa).

The 61-residue stretch at 1 to 61 (MGRVKLKIKR…GRATAFHGEH (61 aa)) folds into the MADS-box domain. Coiled coils occupy residues 77 to 131 (QERT…LMEC) and 293 to 325 (GMEE…QQQD). The tract at residues 310–343 (NLQQQQQQQQQQQQQDPSMYDPMANNNGGCFQIP) is disordered. Over residues 312 to 324 (QQQQQQQQQQQQQ) the composition is skewed to low complexity.

Forms a heterodimer with AGL104. As to expression, expressed in pollen.

It is found in the nucleus. Probable transcription factor that forms a heterodimer with the MADS-box protein AGL104 and is involved in the regulation of pollen maturation at the late stages of pollen development and pollen tube growth. This is Agamous-like MADS-box protein AGL65 from Arabidopsis thaliana (Mouse-ear cress).